A 1428-amino-acid chain; its full sequence is DNA-directed RNA polymerase subunit beta' (1428 aa).

Cysteine 66, cysteine 68, cysteine 81, and cysteine 84 together coordinate Zn(2+). Mg(2+) contacts are provided by aspartate 472, aspartate 474, and aspartate 476. The Zn(2+) site is built by cysteine 816, cysteine 890, cysteine 897, and cysteine 900.

Belongs to the RNA polymerase beta' chain family. The RNAP catalytic core consists of 2 alpha, 1 beta, 1 beta' and 1 omega subunit. When a sigma factor is associated with the core the holoenzyme is formed, which can initiate transcription. Requires Mg(2+) as cofactor. Zn(2+) serves as cofactor.

It catalyses the reaction RNA(n) + a ribonucleoside 5'-triphosphate = RNA(n+1) + diphosphate. Functionally, DNA-dependent RNA polymerase catalyzes the transcription of DNA into RNA using the four ribonucleoside triphosphates as substrates. The protein is DNA-directed RNA polymerase subunit beta' of Phocaeicola vulgatus (strain ATCC 8482 / DSM 1447 / JCM 5826 / CCUG 4940 / NBRC 14291 / NCTC 11154) (Bacteroides vulgatus).